The sequence spans 353 residues: tRNA N6-adenosine threonylcarbamoyltransferase (353 aa).

The Fe cation site is built by histidine 115 and histidine 119. Residues 138-142 (LVSGG), aspartate 171, glycine 184, and asparagine 276 each bind substrate. Aspartate 304 provides a ligand contact to Fe cation.

Belongs to the KAE1 / TsaD family. Fe(2+) is required as a cofactor.

Its subcellular location is the cytoplasm. The enzyme catalyses L-threonylcarbamoyladenylate + adenosine(37) in tRNA = N(6)-L-threonylcarbamoyladenosine(37) in tRNA + AMP + H(+). In terms of biological role, required for the formation of a threonylcarbamoyl group on adenosine at position 37 (t(6)A37) in tRNAs that read codons beginning with adenine. Is involved in the transfer of the threonylcarbamoyl moiety of threonylcarbamoyl-AMP (TC-AMP) to the N6 group of A37, together with TsaE and TsaB. TsaD likely plays a direct catalytic role in this reaction. This is tRNA N6-adenosine threonylcarbamoyltransferase from Xanthomonas euvesicatoria pv. vesicatoria (strain 85-10) (Xanthomonas campestris pv. vesicatoria).